The primary structure comprises 85 residues: Large ribosomal subunit protein bL27 (85 aa).

The segment at 1-20 (MAHKKAGGSTRNGRDSEAKR) is disordered.

It belongs to the bacterial ribosomal protein bL27 family.

This chain is Large ribosomal subunit protein bL27, found in Serratia proteamaculans (strain 568).